A 269-amino-acid polypeptide reads, in one-letter code: Undecaprenyl-diphosphatase (269 aa).

Helical transmembrane passes span 3–23, 41–61, 78–98, 107–127, 148–167, 184–204, 213–233, and 248–268; these read LLIK…LPIS, FATM…VFYY, GFNL…IGLL, LFSP…MIVI, SLLI…SRSA, AEFS…LSLL, LEWQ…LFVV, and FAYY…EKIV.

It belongs to the UppP family.

It localises to the cell membrane. It catalyses the reaction di-trans,octa-cis-undecaprenyl diphosphate + H2O = di-trans,octa-cis-undecaprenyl phosphate + phosphate + H(+). Catalyzes the dephosphorylation of undecaprenyl diphosphate (UPP). Confers resistance to bacitracin. The sequence is that of Undecaprenyl-diphosphatase from Thermoanaerobacter sp. (strain X514).